Here is a 398-residue protein sequence, read N- to C-terminus: MADLDQVLAEIRRGTDEILLESDLLEKLKKGRPLRIKLGADPTAPDIHLGHTVILNKLRLFQELGHEVIFLIGDFTGMVGDPSGKNSTRPPLTREQVLANAETYKEQVYKILDPAKTRIEFNSSWLEPLGAAGMIRLASQQTVARMMERDDFKKRYASGQSIAIHEFMYPLLQGYDSVALKADVELGGTDQKFNLLMGRELQKAEGQKPQAVIMMPLLEGLDGVKKMSKSAHNYIGVSEPANEMFGKIMSISDELMWRYFELLSFRPLAEIEQFKQDIANGANPRDTKISLAKEIIARFHDAAAAESAHQAFIDRFQKGAIPDDIPEVELAAGEGLAIANLLKDADLVGSTSDALRMIKQGAVKMDGEKIDDSRMTLSAGTVAVFQVGKRKFAKVTLV.

Positions 42–51 (PTAPDIHLGH) match the 'HIGH' region motif. Positions 226–230 (KMSKS) match the 'KMSKS' region motif. Position 229 (K229) interacts with ATP. One can recognise an S4 RNA-binding domain in the interval 336 to 397 (LAIANLLKDA…GKRKFAKVTL (62 aa)).

The protein belongs to the class-I aminoacyl-tRNA synthetase family. TyrS type 2 subfamily. Homodimer.

The protein localises to the cytoplasm. The enzyme catalyses tRNA(Tyr) + L-tyrosine + ATP = L-tyrosyl-tRNA(Tyr) + AMP + diphosphate + H(+). Functionally, catalyzes the attachment of tyrosine to tRNA(Tyr) in a two-step reaction: tyrosine is first activated by ATP to form Tyr-AMP and then transferred to the acceptor end of tRNA(Tyr). This is Tyrosine--tRNA ligase from Shewanella oneidensis (strain ATCC 700550 / JCM 31522 / CIP 106686 / LMG 19005 / NCIMB 14063 / MR-1).